A 416-amino-acid polypeptide reads, in one-letter code: Thioredoxin domain-containing protein 5 homolog (416 aa).

The signal sequence occupies residues 1–25; the sequence is MLTRSILSVAVCGLLLSPLLPITRA. 3 consecutive Thioredoxin domains span residues 26-145, 150-272, and 293-412; these read SQEE…KELS, ADLG…KMVG, and AGEE…KFLG. Disulfide bonds link Cys-65–Cys-68, Cys-194–Cys-197, and Cys-331–Cys-334. Positions 413–416 match the Prevents secretion from ER motif; the sequence is HDEL.

It belongs to the protein disulfide isomerase family.

The protein localises to the endoplasmic reticulum. It is found in the cell surface. Its function is as follows. Possesses thioredoxin activity. Acts as a ligand for Drpr and is required for the phagocytosis of apoptotic cells. Binds to the extracellular region of Drpr and augments Drpr tyrosine phosphorylation. This Drosophila melanogaster (Fruit fly) protein is Thioredoxin domain-containing protein 5 homolog.